Consider the following 318-residue polypeptide: C1GALT1-specific chaperone 1 (318 aa).

Residues 1–6 are Cytoplasmic-facing; that stretch reads MLSESS. Residues 7–26 form a helical; Signal-anchor for type II membrane protein membrane-spanning segment; sequence SFLKGVMLGSIFCALITMLG. Residues 27–318 lie on the Lumenal side of the membrane; sequence HIRIGHGNRM…FLPPNGSDND (292 aa).

It belongs to the glycosyltransferase 31 family. Beta3-Gal-T subfamily. Associates with core 1 beta-3-galactosyltransferase (C1GALT1), probably not with the soluble active form. In terms of tissue distribution, ubiquitously expressed. Abundantly expressed in salivary gland, stomach, small intestine, kidney, and testis and at intermediate levels in whole brain, cerebellum, spinal cord, thymus, spleen, trachea, lung, pancreas, ovary, and uterus.

Its subcellular location is the membrane. In terms of biological role, probable chaperone required for the generation of 1 O-glycan Gal-beta1-3GalNAc-alpha1-Ser/Thr (T antigen), which is a precursor for many extended O-glycans in glycoproteins. Probably acts as a specific molecular chaperone assisting the folding/stability of core 1 beta-3-galactosyltransferase (C1GALT1). In Homo sapiens (Human), this protein is C1GALT1-specific chaperone 1 (C1GALT1C1).